A 436-amino-acid polypeptide reads, in one-letter code: D-amino acid dehydrogenase (436 aa).

3 to 17 provides a ligand contact to FAD; it reads IVVLGAGVVGVTSAY.

The protein belongs to the DadA oxidoreductase family. It depends on FAD as a cofactor.

The enzyme catalyses a D-alpha-amino acid + A + H2O = a 2-oxocarboxylate + AH2 + NH4(+). It participates in amino-acid degradation; D-alanine degradation; NH(3) and pyruvate from D-alanine: step 1/1. Functionally, oxidative deamination of D-amino acids. The chain is D-amino acid dehydrogenase from Cereibacter sphaeroides (strain ATCC 17023 / DSM 158 / JCM 6121 / CCUG 31486 / LMG 2827 / NBRC 12203 / NCIMB 8253 / ATH 2.4.1.) (Rhodobacter sphaeroides).